A 156-amino-acid chain; its full sequence is Crossover junction endodeoxyribonuclease RuvC (156 aa).

Residues Asp9, Glu69, and Asp141 contribute to the active site. Mg(2+) contacts are provided by Asp9, Glu69, and Asp141.

It belongs to the RuvC family. In terms of assembly, homodimer which binds Holliday junction (HJ) DNA. The HJ becomes 2-fold symmetrical on binding to RuvC with unstacked arms; it has a different conformation from HJ DNA in complex with RuvA. In the full resolvosome a probable DNA-RuvA(4)-RuvB(12)-RuvC(2) complex forms which resolves the HJ. It depends on Mg(2+) as a cofactor.

Its subcellular location is the cytoplasm. It carries out the reaction Endonucleolytic cleavage at a junction such as a reciprocal single-stranded crossover between two homologous DNA duplexes (Holliday junction).. Its function is as follows. The RuvA-RuvB-RuvC complex processes Holliday junction (HJ) DNA during genetic recombination and DNA repair. Endonuclease that resolves HJ intermediates. Cleaves cruciform DNA by making single-stranded nicks across the HJ at symmetrical positions within the homologous arms, yielding a 5'-phosphate and a 3'-hydroxyl group; requires a central core of homology in the junction. The consensus cleavage sequence is 5'-(A/T)TT(C/G)-3'. Cleavage occurs on the 3'-side of the TT dinucleotide at the point of strand exchange. HJ branch migration catalyzed by RuvA-RuvB allows RuvC to scan DNA until it finds its consensus sequence, where it cleaves and resolves the cruciform DNA. This chain is Crossover junction endodeoxyribonuclease RuvC, found in Acaryochloris marina (strain MBIC 11017).